A 66-amino-acid polypeptide reads, in one-letter code: DNA-directed RNA polymerase subunit omega (66 aa).

The protein belongs to the RNA polymerase subunit omega family. As to quaternary structure, the RNAP catalytic core consists of 2 alpha, 1 beta, 1 beta' and 1 omega subunit. When a sigma factor is associated with the core the holoenzyme is formed, which can initiate transcription.

It carries out the reaction RNA(n) + a ribonucleoside 5'-triphosphate = RNA(n+1) + diphosphate. Promotes RNA polymerase assembly. Latches the N- and C-terminal regions of the beta' subunit thereby facilitating its interaction with the beta and alpha subunits. The protein is DNA-directed RNA polymerase subunit omega of Geobacillus kaustophilus (strain HTA426).